We begin with the raw amino-acid sequence, 97 residues long: CLAVATA3/ESR (CLE)-related protein ESR2-C (97 aa).

The segment at 1–97 (TRTDDKPGVN…IGPPPFLDRY (97 aa)) is disordered. 2 positions are modified to hydroxyproline: proline 47 and proline 50. O-linked (Ara...) hydroxyproline glycosylation is present at proline 50.

It belongs to the CLV3/ESR signal peptide family. Post-translationally, the O-glycosylation (arabinosylation) of the hydroxyproline Pro-50 enhances binding affinity of the ESR2Cp peptide for its receptor. In terms of tissue distribution, seed endosperm.

It is found in the secreted. It localises to the extracellular space. Extracellular signal peptide that regulates cell fate. In Zea mays (Maize), this protein is CLAVATA3/ESR (CLE)-related protein ESR2-C.